The sequence spans 486 residues: Histamine H1 receptor (486 aa).

Residues 1 to 29 (MSFANTSSTFEDKMCEGNRTAMASPQLLP) lie on the Extracellular side of the membrane. N-linked (GlcNAc...) asparagine glycans are attached at residues N5 and N18. The chain crosses the membrane as a helical span at residues 30–50 (LVVVLSSISLVTVGLNLLVLY). Residues 51 to 64 (AVHSERKLHTVGNL) lie on the Cytoplasmic side of the membrane. Residues 65-89 (YIVSLSVADLIVGAVVMPMNILYLI) traverse the membrane as a helical segment. The Extracellular segment spans residues 90 to 97 (MTKWSLGR). Residues 98–123 (PLCLFWLSMDYVASTASIFSVFILCI) traverse the membrane as a helical segment. C100 and C180 are disulfide-bonded. Residues D107 and T112 each contribute to the histamine site. The important for agonist binding stretch occupies residues 107-112 (DYVAST). Topologically, residues 124–144 (DRYRSVQQPLRYLRYRTKTRA) are cytoplasmic. T140 and T142 each carry phosphothreonine. A helical membrane pass occupies residues 145 to 164 (SATILGAWFFSFLWVIPILG). The Extracellular portion of the chain corresponds to 165–188 (WHHFMPPAPELREDKCETDFYNVT). A helical transmembrane segment spans residues 189 to 211 (WFKIMTAIINFYLPTLLMLWFYV). N198 contributes to the histamine binding site. Over 212–415 (KIYKAVRRHC…LNRERKAAKQ (204 aa)) the chain is Cytoplasmic. A Phosphoserine modification is found at S230. Residues 241–253 (SDDTKEGAKKPGR) show a composition bias toward basic and acidic residues. Disordered stretches follow at residues 241–295 (SDDT…GERE) and 310–379 (VAEG…RSGS). S342 and S345 each carry phosphoserine. The segment covering 347-365 (DQTLVDQQSFSRTTDSDTS) has biased composition (polar residues). S379, S381, S395, and S397 each carry phosphoserine. Residues 416–439 (LGFIMAAFILCWIPYFIFFMVIAF) form a helical membrane-spanning segment. The segment at 423 to 427 (FILCW) is important for agonist binding. Y430 provides a ligand contact to histamine. C440 and C443 are oxidised to a cystine. Residues 440–445 (CKSCCS) lie on the Extracellular side of the membrane. Residues 446–468 (EPMHMFTIWLGYINSTLNPLIYP) form a helical membrane-spanning segment. Residues 469-486 (LCNENFKKTFKKILHIRS) are Cytoplasmic-facing.

The protein belongs to the G-protein coupled receptor 1 family. In terms of processing, phosphorylation at sites in the second and third cytoplasmic loops independently contribute to agonist-induced receptor down-regulation.

The protein localises to the cell membrane. G-protein-coupled receptor for histamine, a biogenic amine that functions as an immune modulator and a neurotransmitter. Through the H1 receptor, histamine mediates the contraction of smooth muscles and increases capillary permeability due to contraction of terminal venules. Also mediates neurotransmission in the central nervous system and thereby regulates circadian rhythms, emotional and locomotor activities as well as cognitive functions. This Rattus norvegicus (Rat) protein is Histamine H1 receptor.